We begin with the raw amino-acid sequence, 631 residues long: Phosphomethylpyrimidine synthase (631 aa).

Substrate is bound by residues asparagine 239, methionine 268, tyrosine 297, histidine 333, 353–355 (SRG), 394–397 (DGLR), and glutamate 433. Histidine 437 contacts Zn(2+). Tyrosine 460 contributes to the substrate binding site. Histidine 501 is a binding site for Zn(2+). Residues cysteine 581, cysteine 584, and cysteine 589 each coordinate [4Fe-4S] cluster.

The protein belongs to the ThiC family. As to quaternary structure, homodimer. It depends on [4Fe-4S] cluster as a cofactor.

The catalysed reaction is 5-amino-1-(5-phospho-beta-D-ribosyl)imidazole + S-adenosyl-L-methionine = 4-amino-2-methyl-5-(phosphooxymethyl)pyrimidine + CO + 5'-deoxyadenosine + formate + L-methionine + 3 H(+). It functions in the pathway cofactor biosynthesis; thiamine diphosphate biosynthesis. Catalyzes the synthesis of the hydroxymethylpyrimidine phosphate (HMP-P) moiety of thiamine from aminoimidazole ribotide (AIR) in a radical S-adenosyl-L-methionine (SAM)-dependent reaction. The protein is Phosphomethylpyrimidine synthase of Shigella flexneri serotype 5b (strain 8401).